Here is a 475-residue protein sequence, read N- to C-terminus: Putative response regulator NtrX-like (475 aa).

A Response regulatory domain is found at 5-121 (DVLIVDDEES…KLVILLKRAC (117 aa)). Asp54 carries the post-translational modification 4-aspartylphosphate. Residues 143–369 (LVGGCSVTLK…LRNVVEWTLI (227 aa)) enclose the Sigma-54 factor interaction domain. ATP is bound by residues 171–178 (GKVGSGKE) and 232–241 (ANNGTLYIDE).

Functionally, member of the two-component regulatory system RF_0895/RF_0427. This chain is Putative response regulator NtrX-like, found in Rickettsia felis (strain ATCC VR-1525 / URRWXCal2) (Rickettsia azadi).